We begin with the raw amino-acid sequence, 286 residues long: Putative sugar uptake protein lmo0176 (286 aa).

8 helical membrane-spanning segments follow: residues 4-26 (MIAL…FGGS), 33-55 (GMTL…VYTL), 114-136 (LRII…TSYA), 149-167 (GLIT…VVLI), 177-194 (AILP…IMTH), 207-226 (LLLT…MVHA), 230-252 (VGVA…GGII), and 264-283 (LFVI…IGVA).

It belongs to the GRP transporter (TC 2.A.7.5) family.

It is found in the cell membrane. This is Putative sugar uptake protein lmo0176 from Listeria monocytogenes serovar 1/2a (strain ATCC BAA-679 / EGD-e).